Here is a 352-residue protein sequence, read N- to C-terminus: Cyclin-O (352 aa).

Residues 1–40 (MVTPCPASPGSPAAGAGRRDSHQNLRAPVKKSRRPCLRRK) are disordered. Basic residues predominate over residues 28-40 (PVKKSRRPCLRRK). The residue at position 83 (S83) is a Phosphoserine.

The protein belongs to the cyclin family. In terms of tissue distribution, present in respiratory cells (at protein level). Expressed in multiciliated tissue in brain and fallopian tube (at protein level). Highly expressed in oocytes.

The protein localises to the cytoplasm. Its subcellular location is the nucleus. It localises to the nucleolus. Specifically required for generation of multiciliated cells, possibly by promoting a cell cycle state compatible with centriole amplification and maturation. Acts downstream of MCIDAS to promote mother centriole amplification and maturation in preparation for apical docking. May be involved in apoptosis in lymphoid cells; however, this result requires additional evidences in vivo. May be involved in oocyte meiotic resumption in oocytes. This chain is Cyclin-O, found in Mus musculus (Mouse).